The following is a 228-amino-acid chain: Ankyrin repeat domain-containing protein 46 (228 aa).

ANK repeat units lie at residues 11–40 (QTNV…DPNI), 44–74 (RGRT…PLAT), 77–103 (QGNT…KIDI), and 107–138 (QGAT…EVKG). Residues 195–215 (VLLLILVIALLSLGIAYYVSG) traverse the membrane as a helical segment.

It localises to the membrane. The protein is Ankyrin repeat domain-containing protein 46 (Ankrd46) of Mus musculus (Mouse).